The chain runs to 290 residues: ATP phosphoribosyltransferase (290 aa).

It belongs to the ATP phosphoribosyltransferase family. Long subfamily. Mg(2+) is required as a cofactor.

It is found in the cytoplasm. The catalysed reaction is 1-(5-phospho-beta-D-ribosyl)-ATP + diphosphate = 5-phospho-alpha-D-ribose 1-diphosphate + ATP. The protein operates within amino-acid biosynthesis; L-histidine biosynthesis; L-histidine from 5-phospho-alpha-D-ribose 1-diphosphate: step 1/9. Feedback inhibited by histidine. Catalyzes the condensation of ATP and 5-phosphoribose 1-diphosphate to form N'-(5'-phosphoribosyl)-ATP (PR-ATP). Has a crucial role in the pathway because the rate of histidine biosynthesis seems to be controlled primarily by regulation of HisG enzymatic activity. This chain is ATP phosphoribosyltransferase (hisG), found in Saccharolobus solfataricus (strain ATCC 35092 / DSM 1617 / JCM 11322 / P2) (Sulfolobus solfataricus).